We begin with the raw amino-acid sequence, 119 residues long: Large ribosomal subunit protein bL20c (119 aa).

Belongs to the bacterial ribosomal protein bL20 family.

It is found in the plastid. It localises to the chloroplast. Functionally, binds directly to 23S ribosomal RNA and is necessary for the in vitro assembly process of the 50S ribosomal subunit. It is not involved in the protein synthesizing functions of that subunit. This is Large ribosomal subunit protein bL20c (rpl20) from Zea mays (Maize).